A 158-amino-acid chain; its full sequence is Regulator of sigma D (158 aa).

It belongs to the Rsd/AlgQ family. In terms of assembly, interacts with RpoD.

It localises to the cytoplasm. Its function is as follows. Binds RpoD and negatively regulates RpoD-mediated transcription activation by preventing the interaction between the primary sigma factor RpoD with the catalytic core of the RNA polymerase and with promoter DNA. May be involved in replacement of the RNA polymerase sigma subunit from RpoD to RpoS during the transition from exponential growth to the stationary phase. The sequence is that of Regulator of sigma D from Escherichia coli O127:H6 (strain E2348/69 / EPEC).